The following is a 618-amino-acid chain: MKQSKLLIPTLREMPSDAQVISHALMVRAGYVRQVSAGIYAYLPLANRTIEKFKTIMREEFEKIGAVEMLAPALLTADLWRESGRYETYGEDLYKLKNRDNSDFILGPTHEETFTTLVRNAVKSYKQLPLNLYQIQSKYRDEKRPRNGLLRTREFIMKDGYSFHHNYEDLDVTYEDYRQAYEAIFTRAGLDFKGIIGDGGAMGGKDSQEFMAITPARTDLDRWVVLDKSIASMDDIPKEVLEEIKAELAAWMISGEDTIAYSTESSYAANLEMATNEYKPSSKVAAEDALVEVETPHCKTIDEVAAFLSVDETQTIKTLLFVADNEPVVALLVGNDHINTVKLKNYLAADFLEPASEEEARAFFGAGFGSLGPVNLAQGSRIVADRKVQNLTNAVAGANKDGFHVTGVNPGRDFQAEYVDIREVKEGEMSPDGHGVLQFARGIEVGHIFKLGTRYSDSMGATILDENGRAVPIVMGCYGIGVSRILSAVIEQHARLFVNKTPKGDYRYAWGINFPKELAPFDVHLITVNVKDQVAQDLTAKLEADLMAKGYDVLTDDRNERVGSKFSDSDLIGLPIRVTVGKKAAEGIVEIKIKATGDSIEVNAENLIETLEILTKEH.

The protein belongs to the class-II aminoacyl-tRNA synthetase family. ProS type 1 subfamily. In terms of assembly, homodimer.

Its subcellular location is the cytoplasm. The enzyme catalyses tRNA(Pro) + L-proline + ATP = L-prolyl-tRNA(Pro) + AMP + diphosphate. Functionally, catalyzes the attachment of proline to tRNA(Pro) in a two-step reaction: proline is first activated by ATP to form Pro-AMP and then transferred to the acceptor end of tRNA(Pro). As ProRS can inadvertently accommodate and process non-cognate amino acids such as alanine and cysteine, to avoid such errors it has two additional distinct editing activities against alanine. One activity is designated as 'pretransfer' editing and involves the tRNA(Pro)-independent hydrolysis of activated Ala-AMP. The other activity is designated 'posttransfer' editing and involves deacylation of mischarged Ala-tRNA(Pro). The misacylated Cys-tRNA(Pro) is not edited by ProRS. This is Proline--tRNA ligase from Streptococcus pyogenes serotype M18 (strain MGAS8232).